Here is a 127-residue protein sequence, read N- to C-terminus: Holo-[acyl-carrier-protein] synthase (127 aa).

Positions 8 and 57 each coordinate Mg(2+).

Belongs to the P-Pant transferase superfamily. AcpS family. Mg(2+) serves as cofactor.

Its subcellular location is the cytoplasm. The enzyme catalyses apo-[ACP] + CoA = holo-[ACP] + adenosine 3',5'-bisphosphate + H(+). Its function is as follows. Transfers the 4'-phosphopantetheine moiety from coenzyme A to a Ser of acyl-carrier-protein. The polypeptide is Holo-[acyl-carrier-protein] synthase (Vesicomyosocius okutanii subsp. Calyptogena okutanii (strain HA)).